The sequence spans 282 residues: Shikimate dehydrogenase (NADP(+)) (282 aa).

Shikimate is bound by residues 15 to 17 (SKS) and Thr-62. Lys-66 functions as the Proton acceptor in the catalytic mechanism. Shikimate is bound by residues Asn-87 and Asp-103. NADP(+) contacts are provided by residues 128–132 (GAGGA), 152–157 (NRTPAK), and Met-216. Tyr-218 contacts shikimate. Gly-240 contributes to the NADP(+) binding site.

This sequence belongs to the shikimate dehydrogenase family. As to quaternary structure, homodimer.

The enzyme catalyses shikimate + NADP(+) = 3-dehydroshikimate + NADPH + H(+). The protein operates within metabolic intermediate biosynthesis; chorismate biosynthesis; chorismate from D-erythrose 4-phosphate and phosphoenolpyruvate: step 4/7. In terms of biological role, involved in the biosynthesis of the chorismate, which leads to the biosynthesis of aromatic amino acids. Catalyzes the reversible NADPH linked reduction of 3-dehydroshikimate (DHSA) to yield shikimate (SA). This chain is Shikimate dehydrogenase (NADP(+)), found in Nitrosococcus oceani (strain ATCC 19707 / BCRC 17464 / JCM 30415 / NCIMB 11848 / C-107).